A 418-amino-acid chain; its full sequence is Metal tolerance protein 1 (418 aa).

Residues Met1–Arg56 lie on the Cytoplasmic side of the membrane. The chain crosses the membrane as a helical span at residues Lys57 to Ile77. Over Lys78 to Ala89 the chain is Vacuolar. Residues His90 to Trp110 traverse the membrane as a helical segment. Over Glu111–Arg122 the chain is Cytoplasmic. Residues Ile123–Val143 traverse the membrane as a helical segment. Residues Tyr144 to Ser160 lie on the Vacuolar side of the membrane. A helical transmembrane segment spans residues Leu161 to Gly181. The interval His182–His246 is required for zinc-binding. Residues His182 to Tyr282 lie on the Cytoplasmic side of the membrane. A disordered region spans residues His186–Ala248. Positions His196–His227 are enriched in basic and acidic residues. The segment covering Leu235–His245 has biased composition (basic residues). A helical transmembrane segment spans residues Leu283–Trp303. At Tyr304–Glu307 the chain is on the vacuolar side. The chain crosses the membrane as a helical span at residues Trp308–Ile328. The Cytoplasmic portion of the chain corresponds to Lys329–Glu418.

This sequence belongs to the cation diffusion facilitator (CDF) transporter (TC 2.A.4) family. SLC30A subfamily.

The protein resides in the vacuole membrane. Its function is as follows. Involved in sequestration of excess zinc in the cytoplasm into vacuoles to maintain zinc homeostasis. The polypeptide is Metal tolerance protein 1 (MTP1) (Oryza sativa subsp. japonica (Rice)).